Reading from the N-terminus, the 195-residue chain is Apoptosis-associated speck-like protein containing a CARD (195 aa).

Positions 1 to 91 (MGCTRDAILD…AEQLQETMSK (91 aa)) constitute a Pyrin domain. Glycyl lysine isopeptide (Lys-Gly) (interchain with G-Cter in ubiquitin) cross-links involve residues Lys55 and Lys174. The CARD domain occupies 107–195 (TAKPGLHFVD…PYLVDDLEQS (89 aa)). Ser195 carries the post-translational modification Phosphoserine.

As to quaternary structure, self-associates; enforced oligomerization induces apoptosis, NF-kappa-B regulation and interleukin-1 beta secretion. Homooligomers can form disk-like particles of approximately 12 nm diameter and approximately 1 nm height. Component of several inflammasomes containing one pattern recognition receptor/sensor, such as NLRP1, NLRP2, NLRP3, NLRP6, NLRC4, AIM2, MEFV or NOD2, and probably NLRC4 or NLRP12. Major component of the ASC pyroptosome, a 1-2 um supramolecular assembly (one per macrophage cell) which consists of oligomerized PYCARD dimers and CASP1. Interacts with CASP1 (precursor form); the interaction induces activation of CASP1 leading to the processing of interleukin-1 beta; PYCARD competes with RIPK2 for binding to CASP1. Interacts with NLRP3; the interaction requires the homooligomerization of NLRP3. Interacts with NLRP2, NLRC4, MEFV, CARD16, AIM2, NOD2, RIGI, RIPK2, PYDC1, PYDC2, NLRP10, CASP8, CHUK, IKBKB and BAX. Component of the AIM2 PANoptosome complex, a multiprotein complex that drives inflammatory cell death (PANoptosis). Phosphorylated. Post-translationally, 'Lys-63'-linked polyubiquitination by TRAF3 is critical for speck formation and inflammasome activation. 'Lys-63'-linked deubiquitinated by USP50; a crucial step for NLRP3-mediated inflammasome activation. 'Lys-63'-linked polyubiquitination by PELI1 is also critical for speck formation and inflammasome activation. Deubiquitinated by USP3 that cleaves 'Lys-48'-linked ubiquitin chains and strengthens its stability by blocking proteasomal degradation.

It localises to the cytoplasm. Its subcellular location is the inflammasome. The protein localises to the endoplasmic reticulum. It is found in the mitochondrion. The protein resides in the nucleus. In terms of biological role, functions as a key mediator in apoptosis and inflammation. Promotes caspase-mediated apoptosis involving predominantly caspase-8 and also caspase-9 in a probable cell type-specific manner. Involved in activation of the mitochondrial apoptotic pathway, promotes caspase-8-dependent proteolytic maturation of BID independently of FADD in certain cell types and also mediates mitochondrial translocation of BAX and activates BAX-dependent apoptosis coupled to activation of caspase-9, -2 and -3. Involved in innate immune response by acting as an integral adapter in the assembly of various inflammasomes (NLRP2, NLRP3, NLRP6 and AIM2) which recruit and activate caspase-1 leading to processing and secretion of pro-inflammatory cytokines. Caspase-1-dependent inflammation leads to macrophage pyroptosis, a form of cell death. The function as activating adapter in different types of inflammasomes is mediated by the pyrin and CARD domains and their homotypic interactions. Clustered PYCARD nucleates the formation of caspase-1 filaments through the interaction of their respective CARD domains, acting as a platform for of caspase-1 polymerization. In the NLRC4 inflammasomes seems not be required but facilitates the processing of procaspase-1. In cooperation with NOD2 involved in an inflammasome activated by bacterial muramyl dipeptide leading to caspase-1 activation. May be involved in RIGI-triggered pro-inflammatory responses and inflammasome activation. In collaboration with AIM2 which detects cytosolic double-stranded DNA may also be involved in a caspase-1-independent cell death that involves caspase-8. In adaptive immunity may be involved in maturation of dendritic cells to stimulate T-cell immunity and in cytoskeletal rearrangements coupled to chemotaxis and antigen uptake may be involved in post-transcriptional regulation of the guanine nucleotide exchange factor DOCK2; the latter function is proposed to involve the nuclear form. Also involved in transcriptional activation of cytokines and chemokines independent of the inflammasome; this function may involve AP-1, NF-kappa-B, MAPK and caspase-8 signaling pathways. For regulation of NF-kappa-B activating and inhibiting functions have been reported. Modulates NF-kappa-B induction at the level of the IKK complex by inhibiting kinase activity of CHUK and IKBK. Proposed to compete with RIPK2 for association with CASP1 thereby down-regulating CASP1-mediated RIPK2-dependent NF-kappa-B activation and activating interleukin-1 beta processing. Modulates host resistance to DNA virus infection, probably by inducing the cleavage of and inactivating CGAS in presence of cytoplasmic double-stranded DNA. This Bos taurus (Bovine) protein is Apoptosis-associated speck-like protein containing a CARD (PYCARD).